Here is a 693-residue protein sequence, read N- to C-terminus: Glycine--tRNA ligase beta subunit (693 aa).

The protein belongs to the class-II aminoacyl-tRNA synthetase family. Tetramer of two alpha and two beta subunits.

The protein localises to the cytoplasm. It carries out the reaction tRNA(Gly) + glycine + ATP = glycyl-tRNA(Gly) + AMP + diphosphate. This is Glycine--tRNA ligase beta subunit from Vibrio vulnificus (strain CMCP6).